Here is a 720-residue protein sequence, read N- to C-terminus: Neurochondrin (720 aa).

This sequence belongs to the neurochondrin family.

It localises to the cytoplasm. Its subcellular location is the cytosol. The protein resides in the cell projection. It is found in the dendrite. The protein localises to the postsynapse. Its function is as follows. Probably involved in signal transduction, in the nervous system. Required for the spatial learning process. May also be involved in neurite outgrowth. This Xenopus laevis (African clawed frog) protein is Neurochondrin (ncdn).